Reading from the N-terminus, the 163-residue chain is 2-C-methyl-D-erythritol 2,4-cyclodiphosphate synthase (163 aa).

The a divalent metal cation site is built by Asp12 and His14. 4-CDP-2-C-methyl-D-erythritol 2-phosphate contacts are provided by residues 12 to 14 and 38 to 39; these read DVH and HS. His46 lines the a divalent metal cation pocket. Residues 60–62, 136–139, Phe143, and Arg146 each bind 4-CDP-2-C-methyl-D-erythritol 2-phosphate; these read DIG and TTSE.

It belongs to the IspF family. Homotrimer. The cofactor is a divalent metal cation.

The enzyme catalyses 4-CDP-2-C-methyl-D-erythritol 2-phosphate = 2-C-methyl-D-erythritol 2,4-cyclic diphosphate + CMP. It participates in isoprenoid biosynthesis; isopentenyl diphosphate biosynthesis via DXP pathway; isopentenyl diphosphate from 1-deoxy-D-xylulose 5-phosphate: step 4/6. Functionally, involved in the biosynthesis of isopentenyl diphosphate (IPP) and dimethylallyl diphosphate (DMAPP), two major building blocks of isoprenoid compounds. Catalyzes the conversion of 4-diphosphocytidyl-2-C-methyl-D-erythritol 2-phosphate (CDP-ME2P) to 2-C-methyl-D-erythritol 2,4-cyclodiphosphate (ME-CPP) with a corresponding release of cytidine 5-monophosphate (CMP). This chain is 2-C-methyl-D-erythritol 2,4-cyclodiphosphate synthase, found in Xanthomonas oryzae pv. oryzae (strain MAFF 311018).